Reading from the N-terminus, the 185-residue chain is Elongation factor P (185 aa).

This sequence belongs to the elongation factor P family.

The protein resides in the cytoplasm. It functions in the pathway protein biosynthesis; polypeptide chain elongation. In terms of biological role, involved in peptide bond synthesis. Stimulates efficient translation and peptide-bond synthesis on native or reconstituted 70S ribosomes in vitro. Probably functions indirectly by altering the affinity of the ribosome for aminoacyl-tRNA, thus increasing their reactivity as acceptors for peptidyl transferase. The sequence is that of Elongation factor P from Kosmotoga olearia (strain ATCC BAA-1733 / DSM 21960 / TBF 19.5.1).